The following is a 498-amino-acid chain: Type II secretion system protein E (498 aa).

261–268 (GPTGSGKS) is an ATP binding site. Positions 394, 397, 425, and 428 each coordinate Zn(2+).

The protein belongs to the GSP E family. As to quaternary structure, forms homooligomers; most probably hexamers. Interacts with OutL/GspL. Zn(2+) serves as cofactor.

It localises to the cell inner membrane. The catalysed reaction is ATP + H2O + cellular proteinSide 1 = ADP + phosphate + cellular proteinSide 2.. Functionally, ATPase component of the type II secretion system required for the energy-dependent secretion of extracellular factors such as proteases and toxins from the periplasm. Acts as a molecular motor to provide the energy that is required for assembly of the pseudopilus and the extrusion of substrates generated in the cytoplasm. The polypeptide is Type II secretion system protein E (outE) (Pectobacterium carotovorum subsp. carotovorum (Erwinia carotovora subsp. carotovora)).